Consider the following 644-residue polypeptide: Uromodulin (644 aa).

The first 26 residues, 1 to 26 (MGQLLSLTWLLLVMVVTPWFTVAGAN), serve as a signal peptide directing secretion. Residues 30–66 (EARRCSECHDNATCVLDGVVTTCSCQAGFTGDGLVCE) enclose the EGF-like 1 domain. 21 disulfide bridges follow: cysteine 34–cysteine 43, cysteine 37–cysteine 52, cysteine 54–cysteine 65, cysteine 71–cysteine 84, cysteine 79–cysteine 93, cysteine 95–cysteine 107, cysteine 113–cysteine 127, cysteine 121–cysteine 136, cysteine 138–cysteine 149, cysteine 151–cysteine 162, cysteine 156–cysteine 173, cysteine 177–cysteine 270, cysteine 198–cysteine 285, cysteine 220–cysteine 258, cysteine 226–cysteine 290, cysteine 251–cysteine 259, cysteine 300–cysteine 309, cysteine 303–cysteine 318, cysteine 320–cysteine 350, cysteine 338–cysteine 428, and cysteine 369–cysteine 392. N-linked (GlcNAc...) asparagine glycosylation is present at asparagine 40. An EGF-like 2; calcium-binding domain is found at 67-108 (DIDECATPWTHNCSNSICMNTLGSYECSCQDGFRLTPGLGCI). The N-linked (GlcNAc...) asparagine glycan is linked to asparagine 78. One can recognise an EGF-like 3; calcium-binding domain in the interval 109-150 (DVNECTEQGLSNCHSLATCVNTEGSYSCVCPKGYRGDGWYCE). The segment at 151-174 (CSPGFCEPGLDCLPQGPSGKLVCQ) is beta hairpin. A D10C region spans residues 175 to 294 (DPCNVYETLT…CNLAYCTDPS (120 aa)). Asparagine 235 carries an N-linked (GlcNAc...) asparagine glycan. Asparagine 278 carries an N-linked (GlcNAc...) asparagine glycan. The 32-residue stretch at 295 to 326 (SVEGTCEECGVDEDCVSDNGRWRCQCKQDFNV) folds into the EGF-like 4 domain. N-linked (GlcNAc...) asparagine glycosylation occurs at asparagine 325. The ZP-N stretch occupies residues 337 to 432 (ECEANEIKIS…RINFECSYPL (96 aa)). The 256-residue stretch at 337 to 592 (ECEANEIKIS…PTCSGTRYRS (256 aa)) folds into the ZP domain. Asparagine 399 and asparagine 450 each carry an N-linked (GlcNAc...) asparagine glycan. The segment at 433 to 456 (DMKVSLKTSLQPMVSALNISLGGT) is flexible ZP-N/ZP-C linker; important for secretion and polymerization into filaments. Residues 457–467 (GKFTVQMALFQ) form an internal hydrophobic patch (IHP) region. The tract at residues 457–592 (GKFTVQMALF…PTCSGTRYRS (136 aa)) is ZP-C. Disulfide bonds link cysteine 509/cysteine 569, cysteine 530/cysteine 585, and cysteine 574/cysteine 581. Asparagine 516 carries an N-linked (GlcNAc...) asparagine glycan. The segment at 589-592 (RYRS) is essential for cleavage by HPN. The segment at 601–609 (VLNLGPITR) is external hydrophobic patch (EHP); regulates polymerization into filaments. A lipid anchor (GPI-anchor amidated serine) is attached at serine 615. The propeptide at 616–644 (VSKAASSNLGFLSIWLLLFLSATLTLMVH) is removed in mature form.

In terms of assembly, homodimer that then polymerizes into long filaments. The filaments can additionally assemble laterally to form a sheet. The filaments consist of a zigzag-shaped backbone with laterally protruding arms which interact with bacterial adhesin fimH. Two fimH molecules can bind to a single UMOD monomer. Post-translationally, N-glycosylated. Proteolytically cleaved at a conserved C-terminal proteolytic cleavage site to generate the secreted form found in urine. This cleavage is catalyzed by HPN. As to expression, expression restricted to the thick ascending limb of the loop of Henle (TALH).

Its subcellular location is the apical cell membrane. It is found in the basolateral cell membrane. The protein resides in the cell projection. The protein localises to the cilium membrane. It localises to the secreted. In terms of biological role, functions in biogenesis and organization of the apical membrane of epithelial cells of the thick ascending limb of Henle's loop (TALH), where it promotes formation of complex filamentous gel-like structure that may play a role in the water barrier permeability. May serve as a receptor for binding and endocytosis of cytokines (IL-1, IL-2) and TNF. Facilitates neutrophil migration across renal epithelia. Functionally, in the urine, may contribute to colloid osmotic pressure, retards passage of positively charged electrolytes, and inhibits formation of liquid containing supersaturated salts and subsequent formation of salt crystals. Protects against urinary tract infections by binding to type 1 fimbriated E.coli. Binds to bacterial adhesin fimH which mediates the stable formation of bacterial aggregates, prevents the binding of E.coli to uroplakins UPK1A and UPK1B which act as urothelial receptors for type I fimbriae, and allows for pathogen clearance through micturation. Also promotes aggregation of other bacteria including K.pneumoniae, P.aeruginosa and S.mitis and so may also protect against other uropathogens. In Rattus norvegicus (Rat), this protein is Uromodulin (Umod).